A 193-amino-acid polypeptide reads, in one-letter code: Protein SINE3 (193 aa).

The tract at residues 15-35 is disordered; that stretch reads SELGAKRLKDPEMKNRKVTTE. The span at 18–35 shows a compositional bias: basic and acidic residues; it reads GAKRLKDPEMKNRKVTTE. Positions 155–193 constitute a KASH domain; the sequence is VTVKFRIVLLSFILWAILAAIVVFFSSGEERAYRGPLPT. The helical transmembrane segment at 161-181 threads the bilayer; the sequence is IVLLSFILWAILAAIVVFFSS. The Required for nuclear localization signature appears at 190 to 193; that stretch reads PLPT.

In terms of assembly, interacts with SUN1 and SUN2.

The protein resides in the nucleus membrane. The polypeptide is Protein SINE3 (Arabidopsis thaliana (Mouse-ear cress)).